A 319-amino-acid polypeptide reads, in one-letter code: Ribosomal RNA large subunit methyltransferase F (319 aa).

The segment at 1–25 (MAPFFSAMTSKKQSQGLPKGPHPDN) is disordered. Residues 7–16 (AMTSKKQSQG) show a composition bias toward polar residues.

This sequence belongs to the methyltransferase superfamily. METTL16/RlmF family.

The protein localises to the cytoplasm. The catalysed reaction is adenosine(1618) in 23S rRNA + S-adenosyl-L-methionine = N(6)-methyladenosine(1618) in 23S rRNA + S-adenosyl-L-homocysteine + H(+). Specifically methylates the adenine in position 1618 of 23S rRNA. In Shewanella amazonensis (strain ATCC BAA-1098 / SB2B), this protein is Ribosomal RNA large subunit methyltransferase F.